The following is a 687-amino-acid chain: Guanine-nucleotide exchange factor YEL1 (687 aa).

The span at 14 to 27 (YGVSQKGYNDNFSE) shows a compositional bias: polar residues. 2 disordered regions span residues 14–35 (YGVS…LHGS) and 63–97 (AAND…TDQN). The region spanning 57–264 (ILQNKEAAND…SEYYKTLNET (208 aa)) is the SEC7 domain. Over residues 73–83 (TTDTATAGTGT) the composition is skewed to low complexity. Thr290 bears the Phosphothreonine mark. Ser293 and Ser299 each carry phosphoserine. In terms of domain architecture, PH spans 412 to 551 (TSRRTSLSYL…DCINFWAGRI (140 aa)).

This sequence belongs to the YEL1 family.

The protein localises to the cytoplasm. The protein resides in the cell membrane. Its subcellular location is the bud neck. It localises to the bud tip. In terms of biological role, guanine nucleotide exchange factor for ARF3 required for localization of ARF3 to the bud neck and tip and involved in actin patch polarization. This Saccharomyces cerevisiae (strain YJM789) (Baker's yeast) protein is Guanine-nucleotide exchange factor YEL1 (YEL1).